We begin with the raw amino-acid sequence, 363 residues long: Small ribosomal subunit biogenesis GTPase RsgA (363 aa).

A CP-type G domain is found at 112–268 (HQQVIAANID…LIDTPGMREL (157 aa)). GTP contacts are provided by residues 157–160 (TKAD) and 210–218 (GSSGAGKST). Zn(2+) contacts are provided by cysteine 291, cysteine 296, histidine 298, and cysteine 304. The tract at residues 340–363 (RVAQNNRGKGSGKRPASIDRPGRR) is disordered.

This sequence belongs to the TRAFAC class YlqF/YawG GTPase family. RsgA subfamily. In terms of assembly, monomer. Associates with 30S ribosomal subunit, binds 16S rRNA. It depends on Zn(2+) as a cofactor.

The protein localises to the cytoplasm. Functionally, one of several proteins that assist in the late maturation steps of the functional core of the 30S ribosomal subunit. Helps release RbfA from mature subunits. May play a role in the assembly of ribosomal proteins into the subunit. Circularly permuted GTPase that catalyzes slow GTP hydrolysis, GTPase activity is stimulated by the 30S ribosomal subunit. The sequence is that of Small ribosomal subunit biogenesis GTPase RsgA from Xanthomonas oryzae pv. oryzae (strain PXO99A).